Here is a 1196-residue protein sequence, read N- to C-terminus: Major DNA-binding protein (1196 aa).

The segment at 499–512 (CNLCTFDTRHACVH) is a zinc-finger region. Short sequence motifs (required for filament formation) lie at residues 843-844 (FW) and 1142-1144 (FNF). Residues 1158–1196 (GGPGAPGPAFAGRKRAFHGDDPFGEGPPDKKGDLTLDML) are disordered. A required for nuclear localization region spans residues 1170-1196 (RKRAFHGDDPFGEGPPDKKGDLTLDML). Residues 1174-1196 (FHGDDPFGEGPPDKKGDLTLDML) show a composition bias toward basic and acidic residues.

This sequence belongs to the herpesviridae major DNA-binding protein family. As to quaternary structure, homooligomers. Forms double-helical filaments necessary for the formation of replication compartments within the host nucleus. Interacts with the origin-binding protein. Interacts with the helicase primase complex; this interaction stimulates primer synthesis activity of the helicase-primase complex. Interacts with the DNA polymerase. Interacts with the alkaline exonuclease; this interaction increases its nuclease processivity.

The protein localises to the host nucleus. Its function is as follows. Plays several crucial roles in viral infection. Participates in the opening of the viral DNA origin to initiate replication by interacting with the origin-binding protein. May disrupt loops, hairpins and other secondary structures present on ssDNA to reduce and eliminate pausing of viral DNA polymerase at specific sites during elongation. Promotes viral DNA recombination by performing strand-transfer, characterized by the ability to transfer a DNA strand from a linear duplex to a complementary single-stranded DNA circle. Can also catalyze the renaturation of complementary single strands. Additionally, reorganizes the host cell nucleus, leading to the formation of prereplicative sites and replication compartments. This process is driven by the protein which can form double-helical filaments in the absence of DNA. This is Major DNA-binding protein from Human herpesvirus 1 (strain KOS) (HHV-1).